The primary structure comprises 59 residues: Temporin-CDYe (59 aa).

A signal peptide spans 1 to 22; it reads MFTLKKSMLLLLFLGTISLTLC. Positions 23–42 are excised as a propeptide; that stretch reads EEERDANEEEENGGEVKVEE.

It belongs to the frog skin active peptide (FSAP) family. Temporin subfamily. As to expression, expressed by the skin glands.

It is found in the secreted. In terms of biological role, antimicrobial peptide. The protein is Temporin-CDYe of Rana dybowskii (Dybovsky's frog).